The sequence spans 580 residues: NADH-ubiquinone oxidoreductase chain 5 (580 aa).

Helical transmembrane passes span 12–32, 50–70, 92–112, 113–133, 153–173, 183–203, 215–235, 244–264, 274–293, 298–320, 343–363, 367–387, 427–447, 463–483, 496–516, and 560–580; these read FYFL…FLLM, IVMT…VLLI, ILLV…PNLI, SILL…IYFQ, VALL…YIFY, MMII…QIPF, TPVS…YLLI, WWMA…AGLG, IIAL…LSMG, AFFH…GSII, CSCF…AGFY, LILE…LFFF, ICFL…LMFL, LFVC…KLFF, FVGS…NYPL, and IYLL…VLVN.

It belongs to the complex I subunit 5 family.

Its subcellular location is the mitochondrion inner membrane. It catalyses the reaction a ubiquinone + NADH + 5 H(+)(in) = a ubiquinol + NAD(+) + 4 H(+)(out). In terms of biological role, core subunit of the mitochondrial membrane respiratory chain NADH dehydrogenase (Complex I) that is believed to belong to the minimal assembly required for catalysis. Complex I functions in the transfer of electrons from NADH to the respiratory chain. The immediate electron acceptor for the enzyme is believed to be ubiquinone. The sequence is that of NADH-ubiquinone oxidoreductase chain 5 (mt:ND5) from Anopheles gambiae (African malaria mosquito).